The following is a 172-amino-acid chain: 3-hydroxydecanoyl-[acyl-carrier-protein] dehydratase (172 aa).

Residue His71 is part of the active site.

It belongs to the thioester dehydratase family. FabA subfamily. In terms of assembly, homodimer.

The protein resides in the cytoplasm. The catalysed reaction is a (3R)-hydroxyacyl-[ACP] = a (2E)-enoyl-[ACP] + H2O. It catalyses the reaction (3R)-hydroxydecanoyl-[ACP] = (2E)-decenoyl-[ACP] + H2O. The enzyme catalyses (2E)-decenoyl-[ACP] = (3Z)-decenoyl-[ACP]. The protein operates within lipid metabolism; fatty acid biosynthesis. In terms of biological role, necessary for the introduction of cis unsaturation into fatty acids. Catalyzes the dehydration of (3R)-3-hydroxydecanoyl-ACP to E-(2)-decenoyl-ACP and then its isomerization to Z-(3)-decenoyl-ACP. Can catalyze the dehydratase reaction for beta-hydroxyacyl-ACPs with saturated chain lengths up to 16:0, being most active on intermediate chain length. The protein is 3-hydroxydecanoyl-[acyl-carrier-protein] dehydratase of Edwardsiella ictaluri (strain 93-146).